The primary structure comprises 394 residues: Xylose isomerase (394 aa).

Catalysis depends on residues H54 and D57. 7 residues coordinate Mg(2+): E181, E217, H220, D245, D255, D257, and D292.

This sequence belongs to the xylose isomerase family. Homotetramer. The cofactor is Mg(2+).

Its subcellular location is the cytoplasm. It carries out the reaction alpha-D-xylose = alpha-D-xylulofuranose. This Actinoplanes missouriensis (strain ATCC 14538 / DSM 43046 / CBS 188.64 / JCM 3121 / NBRC 102363 / NCIMB 12654 / NRRL B-3342 / UNCC 431) protein is Xylose isomerase (xylA).